The primary structure comprises 229 residues: Large ribosomal subunit protein uL1c (229 aa).

It belongs to the universal ribosomal protein uL1 family. In terms of assembly, part of the 50S ribosomal subunit.

It is found in the plastid. The protein localises to the chloroplast. Functionally, binds directly to 23S rRNA. Might be involved in E site tRNA release (Potential). In Pyropia yezoensis (Susabi-nori), this protein is Large ribosomal subunit protein uL1c (rpl1).